The primary structure comprises 552 residues: Ferry endosomal RAB5 effector complex subunit 3 (552 aa).

Residues 383 to 403 (LKESLDSGNQNGGNDDKTKNA) are disordered.

Component of the FERRY complex composed of five subunits, TBCK, PPP1R21, FERRY3, CRYZL1 and GATD1 with a ratio of 1:2:1:2:4, respectively.

It is found in the cytoplasm. The protein resides in the early endosome. Its function is as follows. Component of the FERRY complex (Five-subunit Endosomal Rab5 and RNA/ribosome intermediary). The FERRY complex directly interacts with mRNAs and RAB5A, and functions as a RAB5A effector involved in the localization and the distribution of specific mRNAs most likely by mediating their endosomal transport. The complex recruits mRNAs and ribosomes to early endosomes through direct mRNA-interaction. Plays a role in mast cell degranulation. This Homo sapiens (Human) protein is Ferry endosomal RAB5 effector complex subunit 3.